The following is a 127-amino-acid chain: Small ribosomal subunit protein uS12 (127 aa).

The residue at position 89 (Asp89) is a 3-methylthioaspartic acid. The tract at residues 104–127 is disordered; the sequence is TQGVKDRKQARSKYGTKRAKAGKK. Positions 113-127 are enriched in basic residues; it reads ARSKYGTKRAKAGKK.

Belongs to the universal ribosomal protein uS12 family. As to quaternary structure, part of the 30S ribosomal subunit. Contacts proteins S8 and S17. May interact with IF1 in the 30S initiation complex.

With S4 and S5 plays an important role in translational accuracy. Its function is as follows. Interacts with and stabilizes bases of the 16S rRNA that are involved in tRNA selection in the A site and with the mRNA backbone. Located at the interface of the 30S and 50S subunits, it traverses the body of the 30S subunit contacting proteins on the other side and probably holding the rRNA structure together. The combined cluster of proteins S8, S12 and S17 appears to hold together the shoulder and platform of the 30S subunit. This is Small ribosomal subunit protein uS12 from Herminiimonas arsenicoxydans.